The following is a 70-amino-acid chain: Large ribosomal subunit protein bL31 (70 aa).

4 residues coordinate Zn(2+): Cys16, Cys18, Cys37, and Cys40.

The protein belongs to the bacterial ribosomal protein bL31 family. Type A subfamily. Part of the 50S ribosomal subunit. It depends on Zn(2+) as a cofactor.

In terms of biological role, binds the 23S rRNA. This is Large ribosomal subunit protein bL31 from Haemophilus influenzae (strain PittEE).